The sequence spans 341 residues: Methionine import ATP-binding protein MetN 3 (341 aa).

An ABC transporter domain is found at 2–241 (ILLENVKKIY…PQQDITKRFV (240 aa)). 38–45 (GYSGAGKS) provides a ligand contact to ATP.

This sequence belongs to the ABC transporter superfamily. Methionine importer (TC 3.A.1.24) family. The complex is composed of two ATP-binding proteins (MetN), two transmembrane proteins (MetI) and a solute-binding protein (MetQ).

The protein resides in the cell membrane. The catalysed reaction is L-methionine(out) + ATP + H2O = L-methionine(in) + ADP + phosphate + H(+). It catalyses the reaction D-methionine(out) + ATP + H2O = D-methionine(in) + ADP + phosphate + H(+). Its function is as follows. Part of the ABC transporter complex MetNIQ involved in methionine import. Responsible for energy coupling to the transport system. In Bacillus cereus (strain ZK / E33L), this protein is Methionine import ATP-binding protein MetN 3.